The following is a 185-amino-acid chain: Ribosome-recycling factor (185 aa).

Belongs to the RRF family.

The protein localises to the cytoplasm. Functionally, responsible for the release of ribosomes from messenger RNA at the termination of protein biosynthesis. May increase the efficiency of translation by recycling ribosomes from one round of translation to another. This is Ribosome-recycling factor from Corynebacterium jeikeium (strain K411).